A 329-amino-acid polypeptide reads, in one-letter code: RNA-binding protein CP33, chloroplastic (329 aa).

Residues 1 to 69 (MSSAYCSSAV…NIRRHRFFCA (69 aa)) constitute a chloroplast transit peptide. Over residues 77-104 (ADDEIQASVEEEEEVEEEGDEGEEEVEE) the composition is skewed to acidic residues. Disordered stretches follow at residues 77 to 117 (ADDE…EEGR) and 296 to 329 (SERE…NVSA). 2 consecutive RRM domains span residues 116–194 (GRLY…FPEV) and 219–297 (HKVY…LASE).

The protein localises to the plastid. Its subcellular location is the chloroplast. Its function is as follows. Could be involved in splicing and/or processing of chloroplast RNAs. The protein is RNA-binding protein CP33, chloroplastic of Arabidopsis thaliana (Mouse-ear cress).